The following is a 479-amino-acid chain: Ammonium transporter Rh type C (479 aa).

Residues 1 to 9 are Cytoplasmic-facing; sequence MAWNTNLRW. Residues 10–30 traverse the membrane as a helical segment; it reads RLPLTCLLLQVVMVILFGVFV. Over 31–60 the chain is Extracellular; it reads RYDFEADAHWWSERTHKNLSDVENEFYYRY. N48 carries N-linked (GlcNAc...) asparagine glycosylation. Residues 61–81 form a helical membrane-spanning segment; sequence PSFQDVHVMVFVGFGFLMTFL. Over 82-85 the chain is Cytoplasmic; it reads QRYG. The chain crosses the membrane as a helical span at residues 86-106; that stretch reads FSAVGFNFLLAAFGIQWALLM. Residues 107–123 are Extracellular-facing; sequence QGWFHFLQGRYIVVGVE. A helical membrane pass occupies residues 124-144; sequence NLINADFCVASVCVAFGAVLG. The Cytoplasmic segment spans residues 145-148; it reads KVSP. A helical membrane pass occupies residues 149-169; sequence IQLLIMTFFQVTLFAVNEFIL. The Extracellular segment spans residues 170–177; that stretch reads LNLLKVKD. Residues 178 to 200 traverse the membrane as a helical segment; the sequence is AGGSMTIHTFGAYFGLTVTRILY. Residues 201–218 lie on the Cytoplasmic side of the membrane; sequence RRNLEQSKERQNSVYQSD. The helical transmembrane segment at 219-239 threads the bilayer; sequence LFAMIGTLFLWMYWPSFNSAI. Residues 240 to 250 lie on the Extracellular side of the membrane; the sequence is SYHGDSQHRAA. Residues 251–271 traverse the membrane as a helical segment; sequence INTYCSLAACVLTSVAISSAL. Topologically, residues 272-281 are cytoplasmic; that stretch reads HKKGKLDMVH. The helical transmembrane segment at 282 to 302 threads the bilayer; the sequence is IQNATLAGGVAVGTAAEMMLM. Position 303 (P303) is a topological domain, extracellular. A helical membrane pass occupies residues 304 to 324; the sequence is YGALIIGFVCGIISTLGFVYL. Topologically, residues 325 to 345 are cytoplasmic; sequence TPFLESRLHIQDTCGINNLHG. The chain crosses the membrane as a helical span at residues 346 to 366; that stretch reads IPGIIGGIVGAVTAASASLEV. Over 367 to 394 the chain is Extracellular; sequence YGKEGLVHSFDFQGFKGDWTARTQGKFQ. A helical membrane pass occupies residues 395–415; sequence IYGLLVTLAMALMGGIIVGLI. The Cytoplasmic segment spans residues 416–479; it reads LRLPFWGQPS…PMASSVPLVP (64 aa).

Belongs to the ammonium transporter (TC 2.A.49) family. Rh subfamily. Homotrimer. Post-translationally, N-glycosylated.

It localises to the cell membrane. The protein localises to the apical cell membrane. It catalyses the reaction NH4(+)(in) = NH4(+)(out). The enzyme catalyses methylamine(out) = methylamine(in). The catalysed reaction is CO2(out) = CO2(in). Ammonium transporter involved in the maintenance of acid-base homeostasis. Transports ammonium and its related derivative methylammonium across the plasma membrane of epithelial cells likely contributing to renal transepithelial ammonia transport and ammonia metabolism. Postulated to primarily mediate an electroneutral bidirectional transport of NH3 ammonia species according to a mechanism that implies interaction of an NH4(+) ion with acidic residues of the pore entry followed by dissociation of NH4(+) into NH3 and H(+). As a result NH3 transits through the central pore and is protonated on the extracellular side reforming NH4(+). May act as a CO2 channel providing for renal acid secretion. The chain is Ammonium transporter Rh type C (RHCG) from Pan troglodytes (Chimpanzee).